The primary structure comprises 429 residues: Chaperone SurA (429 aa).

An N-terminal signal peptide occupies residues 1 to 18; the sequence is MFKRIALVCALFSGICFA. 2 PpiC domains span residues 170 to 271 and 281 to 380; these read NLTY…KLVA and ITQT…EVIA.

The protein localises to the periplasm. The catalysed reaction is [protein]-peptidylproline (omega=180) = [protein]-peptidylproline (omega=0). Functionally, chaperone involved in the correct folding and assembly of outer membrane proteins. Recognizes specific patterns of aromatic residues and the orientation of their side chains, which are found more frequently in integral outer membrane proteins. May act in both early periplasmic and late outer membrane-associated steps of protein maturation. This is Chaperone SurA from Legionella pneumophila (strain Paris).